A 529-amino-acid polypeptide reads, in one-letter code: Peptide chain release factor 3 (529 aa).

The tr-type G domain maps to 11 to 280 (ATRRTFAIIS…GLVQWAPPPQ (270 aa)). Residues 20–27 (SHPDAGKT), 88–92 (DTPGH), and 142–145 (NKLD) contribute to the GTP site.

Belongs to the TRAFAC class translation factor GTPase superfamily. Classic translation factor GTPase family. PrfC subfamily.

It is found in the cytoplasm. Increases the formation of ribosomal termination complexes and stimulates activities of RF-1 and RF-2. It binds guanine nucleotides and has strong preference for UGA stop codons. It may interact directly with the ribosome. The stimulation of RF-1 and RF-2 is significantly reduced by GTP and GDP, but not by GMP. The sequence is that of Peptide chain release factor 3 from Alcanivorax borkumensis (strain ATCC 700651 / DSM 11573 / NCIMB 13689 / SK2).